The sequence spans 427 residues: Trigger factor (427 aa).

The PPIase FKBP-type domain maps to 163 to 248 (GDTVVIDFVG…VNEVKAKEVP (86 aa)).

The protein belongs to the FKBP-type PPIase family. Tig subfamily.

The protein localises to the cytoplasm. The enzyme catalyses [protein]-peptidylproline (omega=180) = [protein]-peptidylproline (omega=0). In terms of biological role, involved in protein export. Acts as a chaperone by maintaining the newly synthesized protein in an open conformation. Functions as a peptidyl-prolyl cis-trans isomerase. The protein is Trigger factor of Streptococcus thermophilus (strain CNRZ 1066).